Consider the following 1483-residue polypeptide: Tyrosine-protein kinase BAZ1B (1483 aa).

Residues 20-126 enclose the WAC domain; sequence EPLFTIPHTQ…GEECDFEVGK (107 aa). A disordered region spans residues 145–212; sequence EEATEKKSDG…TSLKKGERKW (68 aa). 2 stretches are compositionally biased toward basic and acidic residues: residues 148–165 and 172–195; these read TEKKSDGACDSPSSDKEN and DHQKKETVVKEDEGRRESINDRAR. 3 positions are modified to phosphoserine: Ser-152, Ser-158, and Ser-161. The C motif motif lies at 207 to 213; sequence KGERKWA. Position 266 is a phosphothreonine (Thr-266). The disordered stretch occupies residues 302 to 333; that stretch reads NPSTKRKNTGSPDRKPSKKSKTDNSSLSSPLN. Ser-330, Ser-345, Ser-347, Ser-349, Ser-361, and Ser-374 each carry phosphoserine. Disordered stretches follow at residues 379–432 and 446–470; these read HTNF…KTPK and GTQKMTRAPRNSGGTPRTSSKPHKH. Composition is skewed to basic residues over residues 384-395 and 423-432; these read IPKKGPPAKKPG and SPKKGLKTPK. Positions 533 to 586 form a coiled coil; that stretch reads KRWASMSEEQRKEYLKKKREELKKKLKEKAKERREKEMLERLEKQKRYEDQELT. Residues 604–668 enclose the DDT domain; the sequence is NTLFGDVAMV…LQTLLQDEIA (65 aa). Residues Ser-699, Ser-705, Ser-708, and Ser-716 each carry the phosphoserine modification. Residues 768–814 adopt a coiled-coil conformation; it reads TRQQMSAELWKERLAVLKEENDKKRAEKQKRKEMEAKNKENGKVENG. Basic and acidic residues predominate over residues 788–810; that stretch reads NDKKRAEKQKRKEMEAKNKENGK. Residues 788–817 form a disordered region; the sequence is NDKKRAEKQKRKEMEAKNKENGKVENGLGK. Lys-826 is covalently cross-linked (Glycyl lysine isopeptide (Lys-Gly) (interchain with G-Cter in SUMO1); alternate). Lys-826 participates in a covalent cross-link: Glycyl lysine isopeptide (Lys-Gly) (interchain with G-Cter in SUMO2); alternate. The stretch at 850–893 forms a coiled coil; it reads IQAKKEREIQEREMKVKLERQAEEERIRKHKAAAEKAFQEGIAK. Residue Lys-853 forms a Glycyl lysine isopeptide (Lys-Gly) (interchain with G-Cter in SUMO2) linkage. Ser-947 bears the Phosphoserine mark. Residues Lys-1043, Lys-1089, and Lys-1107 each participate in a glycyl lysine isopeptide (Lys-Gly) (interchain with G-Cter in SUMO2) cross-link. The segment at 1184-1234 adopts a PHD-type zinc-finger fold; it reads NARCKVCRKKGEDDKLILCDECNKAFHLFCLRPALYEVPDGEWQCPACQPA. The disordered stretch occupies residues 1237-1326; the sequence is RRNSRGRNYT…PKAPPVDDAE (90 aa). Residues 1245-1283 adopt a coiled-coil conformation; that stretch reads YTEESASEDSEDDESDEEEEEEEEEEEEEDYEVAGLRLR. Acidic residues predominate over residues 1249 to 1276; that stretch reads SASEDSEDDESDEEEEEEEEEEEEEDYE. Composition is skewed to basic residues over residues 1282 to 1292 and 1301 to 1316; these read LRPRKTIRGKH and SGRRPGKKPHSTRRSQ. A Phosphoserine modification is found at Ser-1315. Residue Lys-1335 is modified to N6-acetyllysine. The Bromo domain maps to 1339 to 1443; sequence RRQSLELQKC…QCLVALLHKH (105 aa). Ser-1342 and Ser-1468 each carry phosphoserine. The disordered stretch occupies residues 1455–1483; the sequence is KKFPDRLAEDEGDSEPEAVGQSRGRRQKK.

Belongs to the WAL family. BAZ1B subfamily. Component of the WICH-1 ISWI chromatin remodeling complex, at least composed of SMARCA1 and BAZ1B/WSTF, which regulates the spacing of histone octamers on the DNA template to facilitate access to DNA. Within the WICH-1 ISWI chromatin remodeling complex interacts with SMARCA1; the interaction is direct. Component of the WICH-5 ISWI chromatin remodeling complex (also called the WICH complex), at least composed of SMARCA5/SNF2H and BAZ1B/WSTF, which regulates the spacing of histone octamers on the DNA template to facilitate access to DNA. Within the WICH-5 ISWI chromatin remodeling complex interacts with SMARCA5/SNF2H; the interaction is direct. Component of the B-WICH chromatin remodeling complex, at least composed of SMARCA5/SNF2H, BAZ1B/WSTF, SF3B1, DEK, MYO1C, ERCC6, MYBBP1A and DDX21. Within the B-WICH chromatin remodeling complex, interacts with SMARCA5/SNF2H, DDX21, DEK, MYBBP1A, SF3B1, ERCC6 and MYO1C. Interacts with PCNA; the interaction is direct and is required for BAZ1B/WSTF binding to replication foci during S phase. Interacts with CDT1. Mn(2+) serves as cofactor. In terms of tissue distribution, ubiquitously expressed with high levels of expression in heart, brain, placenta, skeletal muscle and ovary.

Its subcellular location is the nucleus. The catalysed reaction is L-tyrosyl-[protein] + ATP = O-phospho-L-tyrosyl-[protein] + ADP + H(+). Atypical tyrosine-protein kinase that plays a central role in chromatin remodeling and acts as a transcription regulator. Involved in DNA damage response by phosphorylating 'Tyr-142' of histone H2AX (H2AXY142ph). H2AXY142ph plays a central role in DNA repair and acts as a mark that distinguishes between apoptotic and repair responses to genotoxic stress. Regulatory subunit of the ATP-dependent WICH-1 and WICH-5 ISWI chromatin remodeling complexes, which form ordered nucleosome arrays on chromatin and facilitate access to DNA during DNA-templated processes such as DNA replication, transcription, and repair. Both complexes regulate the spacing of nucleosomes along the chromatin and have the ability to slide mononucleosomes to the center of a DNA template. The WICH-1 ISWI chromatin remodeling complex has a lower ATP hydrolysis rate than the WICH-5 ISWI chromatin remodeling complex. The WICH-5 ISWI chromatin-remodeling complex regulates the transcription of various genes, has a role in RNA polymerase I transcription. Within the B-WICH complex has a role in RNA polymerase III transcription. Mediates the recruitment of the WICH-5 ISWI chromatin remodeling complex to replication foci during DNA replication. This is Tyrosine-protein kinase BAZ1B (BAZ1B) from Homo sapiens (Human).